The sequence spans 122 residues: Large ribosomal subunit protein uL14 (122 aa).

Belongs to the universal ribosomal protein uL14 family. Part of the 50S ribosomal subunit. Forms a cluster with proteins L3 and L19. In the 70S ribosome, L14 and L19 interact and together make contacts with the 16S rRNA in bridges B5 and B8.

Its function is as follows. Binds to 23S rRNA. Forms part of two intersubunit bridges in the 70S ribosome. The polypeptide is Large ribosomal subunit protein uL14 (Polaromonas naphthalenivorans (strain CJ2)).